Reading from the N-terminus, the 444-residue chain is MLDNFIAHQATKEFSVSEISNKIKELLENNFGYIKVKGEISGLKIANSGHAYFNLKENTAILACTCWRPILAKITFPLNDGMEVVISGKLSSYAGNSRYQLSVDNLQPTGLGAMLQILNERKAKLEKEGLFNKIRIPIPFLPDKIGVITSITGAVIKDIIHRIRERFPTRIIIWPVSVQGENSGNEIAEAIEGFNNLEEVNKPRVIIVARGGGSIEDLWSFNDEILVRAAYNSKIPIISAVGHEVDYTLIDLAADKRAPTPTAAAEFAVPVRSILNNTLQSYEKILLNNTSRLIKYHEQNIVNYNKIHRYLSHYINNRQQLLDETGFNLLDALPCFIELQETKIKSFSKERVNPAKIINYKTLELTHQTAYLSKSANNTLKNFEYKLELNSTLLASLDYHNVLKRGFAIVKGETGNFLSSKMTAANEKIFNIKFSDGEIKVVRA.

It belongs to the XseA family. Heterooligomer composed of large and small subunits.

The protein resides in the cytoplasm. The catalysed reaction is Exonucleolytic cleavage in either 5'- to 3'- or 3'- to 5'-direction to yield nucleoside 5'-phosphates.. Functionally, bidirectionally degrades single-stranded DNA into large acid-insoluble oligonucleotides, which are then degraded further into small acid-soluble oligonucleotides. The protein is Exodeoxyribonuclease 7 large subunit of Rickettsia conorii (strain ATCC VR-613 / Malish 7).